The chain runs to 146 residues: Hemoglobin subunit beta (146 aa).

The residue at position 1 (Val1) is an N-acetylvaline. The 145-residue stretch at 2–146 (HLTAAEKSAI…VANALAHKYH (145 aa)) folds into the Globin domain. His63 contributes to the heme b binding site. An N6-acetyllysine modification is found at Lys82. Residue His92 participates in heme b binding. Residue Cys93 is modified to S-nitrosocysteine. An N6-acetyllysine modification is found at Lys144.

This sequence belongs to the globin family. As to quaternary structure, heterotetramer of two alpha chains and two beta chains. In terms of tissue distribution, red blood cells.

Functionally, involved in oxygen transport from the lung to the various peripheral tissues. The chain is Hemoglobin subunit beta (HBB) from Cavia porcellus (Guinea pig).